Reading from the N-terminus, the 486-residue chain is tRNA sulfurtransferase (486 aa).

The region spanning 60-166 (QKICAMLINI…DNQLFIIIKR (107 aa)) is the THUMP domain. Residues 184–185 (LI), lysine 266, glycine 288, and glutamine 297 contribute to the ATP site. A disulfide bond links cysteine 345 and cysteine 458. The Rhodanese domain occupies 406–484 (LDSTDVVLDI…GFSNVKIYRP (79 aa)). The Cysteine persulfide intermediate role is filled by cysteine 458.

Belongs to the ThiI family.

It is found in the cytoplasm. The enzyme catalyses [ThiI sulfur-carrier protein]-S-sulfanyl-L-cysteine + a uridine in tRNA + 2 reduced [2Fe-2S]-[ferredoxin] + ATP + H(+) = [ThiI sulfur-carrier protein]-L-cysteine + a 4-thiouridine in tRNA + 2 oxidized [2Fe-2S]-[ferredoxin] + AMP + diphosphate. It catalyses the reaction [ThiS sulfur-carrier protein]-C-terminal Gly-Gly-AMP + S-sulfanyl-L-cysteinyl-[cysteine desulfurase] + AH2 = [ThiS sulfur-carrier protein]-C-terminal-Gly-aminoethanethioate + L-cysteinyl-[cysteine desulfurase] + A + AMP + 2 H(+). It participates in cofactor biosynthesis; thiamine diphosphate biosynthesis. Catalyzes the ATP-dependent transfer of a sulfur to tRNA to produce 4-thiouridine in position 8 of tRNAs, which functions as a near-UV photosensor. Also catalyzes the transfer of sulfur to the sulfur carrier protein ThiS, forming ThiS-thiocarboxylate. This is a step in the synthesis of thiazole, in the thiamine biosynthesis pathway. The sulfur is donated as persulfide by IscS. This Blochmanniella pennsylvanica (strain BPEN) protein is tRNA sulfurtransferase.